The primary structure comprises 732 residues: Glycine--tRNA ligase (732 aa).

Residues 1–27 (MRHVLSLVYKCSVFSKQVTVFSNHLRL) constitute a mitochondrion transit peptide. Residues 61 to 117 (ILAPLRANVKEQGDLVRKLKEEKAPEIDIKKAVAELKTRKKILEDKELSLAPAEDLF) form the WHEP-TRS domain. Residue Glu-297 coordinates glycine. Residues 329–331 (RNE) and 340–341 (RV) contribute to the ATP site. Glu-348 is a binding site for glycine. 453–454 (EC) serves as a coordination point for ATP. 572-574 (EPS) contacts glycine. An ATP-binding site is contributed by Arg-579.

It belongs to the class-II aminoacyl-tRNA synthetase family. As to quaternary structure, homodimer.

It is found in the mitochondrion. It localises to the cytoplasm. Its subcellular location is the cell projection. The protein localises to the axon. The enzyme catalyses tRNA(Gly) + glycine + ATP = glycyl-tRNA(Gly) + AMP + diphosphate. It carries out the reaction 2 ATP + H(+) = P(1),P(4)-bis(5'-adenosyl) tetraphosphate + diphosphate. In terms of biological role, catalyzes the ATP-dependent ligation of glycine to the 3'-end of its cognate tRNA, via the formation of an aminoacyl-adenylate intermediate (Gly-AMP). Also produces diadenosine tetraphosphate (Ap4A), a universal pleiotropic signaling molecule needed for cell regulation pathways, by direct condensation of 2 ATPs. Thereby, may play a special role in Ap4A homeostasis. Required for terminal arborization of both dendrites and axons during development. In Bombyx mori (Silk moth), this protein is Glycine--tRNA ligase.